The primary structure comprises 279 residues: Phosphatidylglycerol--prolipoprotein diacylglyceryl transferase (279 aa).

The next 7 helical transmembrane spans lie at 25 to 45, 60 to 80, 103 to 123, 133 to 153, 181 to 201, 209 to 229, and 236 to 256; these read WYGL…KFFV, YFIW…ILIY, FVGI…IATI, LWSL…FGRI, PSQL…LYFY, GELI…TEFL, and IGYF…MLIL. An a 1,2-diacyl-sn-glycero-3-phospho-(1'-sn-glycerol)-binding site is contributed by Arg152.

Belongs to the Lgt family.

It localises to the cell inner membrane. The catalysed reaction is L-cysteinyl-[prolipoprotein] + a 1,2-diacyl-sn-glycero-3-phospho-(1'-sn-glycerol) = an S-1,2-diacyl-sn-glyceryl-L-cysteinyl-[prolipoprotein] + sn-glycerol 1-phosphate + H(+). It participates in protein modification; lipoprotein biosynthesis (diacylglyceryl transfer). In terms of biological role, catalyzes the transfer of the diacylglyceryl group from phosphatidylglycerol to the sulfhydryl group of the N-terminal cysteine of a prolipoprotein, the first step in the formation of mature lipoproteins. The sequence is that of Phosphatidylglycerol--prolipoprotein diacylglyceryl transferase from Campylobacter hominis (strain ATCC BAA-381 / DSM 21671 / CCUG 45161 / LMG 19568 / NCTC 13146 / CH001A).